The primary structure comprises 145 residues: MTDLAIIWTNGRGDIAQDGIDMLTDDSLTTDVTISLFTDRRALDSDTLPDGSDDRRGWWGDSYRDRPIGSRLWLLSREKATPDTLERARGYAEEALEWLKTAGRVSAINVRAEQLHQGWLYLYIALTLPDGSVIPYEFKAAFNGV.

As to quaternary structure, part of a complex composed of three DNA circularization protein N, three baseplate hub protein gp44 and three sub-complex wedge (made of two copies of each baseplate protein gp46, gp47 and gp48) that forms the baseplate.

It is found in the virion. The protein resides in the host cytoplasm. Component of the baseplate. Probable connector between the central and peripheral parts of the baseplate. Probably involved in tail assembly. This is Baseplate protein gp46 from Enterobacteriaceae (Bacteriophage Mu).